The sequence spans 159 residues: Neuroglobin-2 (159 aa).

The Globin domain occupies 3–151 (KLTEKDKELI…VVAAMSRGWA (149 aa)). 2 residues coordinate heme b: H66 and H98.

The protein belongs to the globin family. In terms of assembly, monomer. Homodimers and homotetramers. Mainly monomeric but also detected as part of homodimers and homotetramers.

The protein localises to the cytoplasm. It localises to the cytosol. It is found in the mitochondrion matrix. It carries out the reaction Fe(III)-heme b-[protein] + nitric oxide + H2O = Fe(II)-heme b-[protein] + nitrite + 2 H(+). Monomeric globin with a bis-histidyl six-coordinate heme-iron atom through which it can bind dioxygen, carbon monoxide and nitric oxide. Could help transport oxygen and increase its availability to the metabolically active neuronal tissues, though its low quantity in tissues as well as its high affinity for dioxygen, which may limit its oxygen-releasing ability, argue against it. The ferrous/deoxygenated form exhibits a nitrite reductase activity and it could produce nitric oxide which in turn inhibits cellular respiration in response to hypoxia. In its ferrous/deoxygenated state, it may also exhibit GDI (Guanine nucleotide Dissociation Inhibitor) activity toward heterotrimeric G-alpha proteins, thereby regulating signal transduction to facilitate neuroprotective responses in the wake of hypoxia and associated oxidative stress. The chain is Neuroglobin-2 (ngb2) from Oncorhynchus mykiss (Rainbow trout).